A 262-amino-acid chain; its full sequence is Ribosomal RNA small subunit methyltransferase A (262 aa).

Residues N14, L16, G41, E62, D87, and N109 each coordinate S-adenosyl-L-methionine.

This sequence belongs to the class I-like SAM-binding methyltransferase superfamily. rRNA adenine N(6)-methyltransferase family. RsmA subfamily.

Its subcellular location is the cytoplasm. It catalyses the reaction adenosine(1518)/adenosine(1519) in 16S rRNA + 4 S-adenosyl-L-methionine = N(6)-dimethyladenosine(1518)/N(6)-dimethyladenosine(1519) in 16S rRNA + 4 S-adenosyl-L-homocysteine + 4 H(+). Its function is as follows. Specifically dimethylates two adjacent adenosines (A1518 and A1519) in the loop of a conserved hairpin near the 3'-end of 16S rRNA in the 30S particle. May play a critical role in biogenesis of 30S subunits. This chain is Ribosomal RNA small subunit methyltransferase A, found in Francisella tularensis subsp. tularensis (strain FSC 198).